The primary structure comprises 480 residues: Protein nucleotidyltransferase YdiU (480 aa).

ATP contacts are provided by Gly-86, Gly-88, Arg-89, Lys-109, Asp-121, Gly-122, Arg-172, and Arg-179. Residue Asp-248 is the Proton acceptor of the active site. Mg(2+) is bound by residues Asn-249 and Asp-258. Position 258 (Asp-258) interacts with ATP.

This sequence belongs to the SELO family. The cofactor is Mg(2+). Mn(2+) serves as cofactor.

The catalysed reaction is L-seryl-[protein] + ATP = 3-O-(5'-adenylyl)-L-seryl-[protein] + diphosphate. The enzyme catalyses L-threonyl-[protein] + ATP = 3-O-(5'-adenylyl)-L-threonyl-[protein] + diphosphate. It catalyses the reaction L-tyrosyl-[protein] + ATP = O-(5'-adenylyl)-L-tyrosyl-[protein] + diphosphate. It carries out the reaction L-histidyl-[protein] + UTP = N(tele)-(5'-uridylyl)-L-histidyl-[protein] + diphosphate. The catalysed reaction is L-seryl-[protein] + UTP = O-(5'-uridylyl)-L-seryl-[protein] + diphosphate. The enzyme catalyses L-tyrosyl-[protein] + UTP = O-(5'-uridylyl)-L-tyrosyl-[protein] + diphosphate. In terms of biological role, nucleotidyltransferase involved in the post-translational modification of proteins. It can catalyze the addition of adenosine monophosphate (AMP) or uridine monophosphate (UMP) to a protein, resulting in modifications known as AMPylation and UMPylation. This chain is Protein nucleotidyltransferase YdiU, found in Salmonella newport (strain SL254).